The sequence spans 453 residues: Phosphoglucosamine mutase (453 aa).

Ser-105 (phosphoserine intermediate) is an active-site residue. Residues Ser-105, Asp-244, Asp-246, and Asp-248 each contribute to the Mg(2+) site. Phosphoserine is present on Ser-105.

Belongs to the phosphohexose mutase family. Mg(2+) serves as cofactor. Activated by phosphorylation.

It carries out the reaction alpha-D-glucosamine 1-phosphate = D-glucosamine 6-phosphate. In terms of biological role, catalyzes the conversion of glucosamine-6-phosphate to glucosamine-1-phosphate. The sequence is that of Phosphoglucosamine mutase from Chromohalobacter salexigens (strain ATCC BAA-138 / DSM 3043 / CIP 106854 / NCIMB 13768 / 1H11).